The following is a 605-amino-acid chain: UvrABC system protein C (605 aa).

The GIY-YIG domain maps to 14-92 (QSCGVYKMVG…IKSLKPLYNI (79 aa)). The UVR domain occupies 202-237 (KEVKEQLLFTMRKCSSEENYELAAIYRDRVKFLEQI).

This sequence belongs to the UvrC family. As to quaternary structure, interacts with UvrB in an incision complex.

It localises to the cytoplasm. Functionally, the UvrABC repair system catalyzes the recognition and processing of DNA lesions. UvrC both incises the 5' and 3' sides of the lesion. The N-terminal half is responsible for the 3' incision and the C-terminal half is responsible for the 5' incision. The protein is UvrABC system protein C of Wolbachia pipientis wMel.